Consider the following 267-residue polypeptide: 2-keto-3-deoxy-L-rhamnonate aldolase (267 aa).

H49 (proton acceptor) is an active-site residue. Q151 lines the substrate pocket. E153 lines the Mg(2+) pocket. Substrate contacts are provided by A178 and D179. A Mg(2+)-binding site is contributed by D179.

It belongs to the HpcH/HpaI aldolase family. KDR aldolase subfamily. In terms of assembly, homohexamer. Mg(2+) is required as a cofactor.

It carries out the reaction 2-dehydro-3-deoxy-L-rhamnonate = (S)-lactaldehyde + pyruvate. Its function is as follows. Catalyzes the reversible retro-aldol cleavage of 2-keto-3-deoxy-L-rhamnonate (KDR) to pyruvate and lactaldehyde. This Escherichia coli O157:H7 protein is 2-keto-3-deoxy-L-rhamnonate aldolase.